We begin with the raw amino-acid sequence, 574 residues long: Septation ring formation regulator EzrA (574 aa).

The Extracellular segment spans residues 1–7 (MSSGIVL). The helical transmembrane segment at 8-26 (LIVAIVLVVIIAYLIAIII) threads the bilayer. The Cytoplasmic segment spans residues 27-574 (RKRNDSLITK…YEKTRETIRF (548 aa)). Coiled coils occupy residues 102–141 (NFIR…EEKN), 255–368 (KNIE…KDVL), and 409–495 (LKNI…EETA).

This sequence belongs to the EzrA family.

It is found in the cell membrane. Its function is as follows. Negative regulator of FtsZ ring formation; modulates the frequency and position of FtsZ ring formation. Inhibits FtsZ ring formation at polar sites. Interacts either with FtsZ or with one of its binding partners to promote depolymerization. In Streptococcus mutans serotype c (strain ATCC 700610 / UA159), this protein is Septation ring formation regulator EzrA.